A 272-amino-acid polypeptide reads, in one-letter code: L-aminoadipate-semialdehyde dehydrogenase-phosphopantetheinyl transferase (272 aa).

This sequence belongs to the P-Pant transferase superfamily. AcpS family.

The catalysed reaction is apo-[ACP] + CoA = holo-[ACP] + adenosine 3',5'-bisphosphate + H(+). Catalyzes the transfer of a 4'-phosphopantetheine moiety from coenzyme A to a serine residue of acceptor proteins, such as alpha-aminoadipate reductase. Necessary for alpha-aminoadipate reductase activity. The sequence is that of L-aminoadipate-semialdehyde dehydrogenase-phosphopantetheinyl transferase from Saccharomyces cerevisiae (strain ATCC 204508 / S288c) (Baker's yeast).